Here is a 292-residue protein sequence, read N- to C-terminus: Keratin-associated protein 10-9 (292 aa).

Tandem repeats lie at residues 26–30, 31–35, 36–40, 57–61, 79–83, 99–103, 104–108, 109–113, 114–118, 120–124, 130–134, 140–144, 145–149, 150–154, 162–166, 172–176, 182–186, 187–191, 192–196, 197–201, 209–213, 219–223, 224–228, 243–247, and 250–254. A 25 X 5 AA repeats of C-C-X(3) region spans residues 26 to 254; it reads CCEPPCCATS…VPVSSCCAPT (229 aa).

This sequence belongs to the KRTAP type 10 family. In terms of assembly, interacts with hair keratins. As to expression, restricted to a narrow region of the hair fiber cuticle, lying approximately 20 cell layers above the apex of the dermal papilla of the hair root; not detected in any other tissues.

In terms of biological role, in the hair cortex, hair keratin intermediate filaments are embedded in an interfilamentous matrix, consisting of hair keratin-associated proteins (KRTAP), which are essential for the formation of a rigid and resistant hair shaft through their extensive disulfide bond cross-linking with abundant cysteine residues of hair keratins. The matrix proteins include the high-sulfur and high-glycine-tyrosine keratins. The protein is Keratin-associated protein 10-9 (KRTAP10-9) of Homo sapiens (Human).